The sequence spans 730 residues: MEEKKCPVTGHTQHTPTGGGTKNKDWWPNQLNLNILHQNSALGNPMDPDFNYAEEFKKLDLAAVKKDLYALMTDSQDWWPADYGHYGPLFIRMAWHSAGTYRLNDGRGGAGDGTQRFAPLNSWPDNVNLDKARRLLWPIKQKYGKKISWADLMVLAGNCALESMGFKTFGFAGGREDVWEPQEDIYWGSEGEWLGDQRYSGDRDLENPLAAVQMGLIYVNPEGPNGQPSVLASGRDVRDTFKRMAMNDEETVALVAGGHTFGKCHGAGPASHVGPEPEAAPLEEQGLGWKSTFRSGKGGDTIGSGIEGAWKPNPTTWDMGYLETLFKYDWDLVKSPAGAWQWVPTDPAAADTVQDAHDPAKRHAPMMTTADLSLRMDPIFGPIAKRFRDNPEEFADAFARAWFKLTHRDMGPRSRYLGPEVPEEELIWQDPVPPVDHELIDEQDIADLKAKLLASGLSVSQLVSTAWASASTFRGSDKRGGANGARIRLAPQKDWEINQPAQLAEVLAALEGIQTEFNSSQSGTKKVSLADLIVLGGAAAIEQAARNAGHTLVLPFTPGRTDATQEQTEIYSFAVMEPKADGFRNYLKGKSSAPAEEMLVDRAQLLTLTAPEMTVLLGGLRVLNANYGQSKHGVFTQRPETLTNDFFVNLLDMGTEWKAVSEEKALYEGRDRATGELKWTGTRVDLVFGSNSQLRALAEVYACSDSQDKFLQDFVSAWNKVMNADRFDLA.

The segment at 1 to 25 is disordered; that stretch reads MEEKKCPVTGHTQHTPTGGGTKNKD. Positions 95 to 218 form a cross-link, tryptophyl-tyrosyl-methioninium (Trp-Tyr) (with M-244); the sequence is WHSAGTYRLN…LAAVQMGLIY (124 aa). H96 (proton acceptor) is an active-site residue. A cross-link (tryptophyl-tyrosyl-methioninium (Tyr-Met) (with W-95)) is located at residues 218-244; the sequence is YVNPEGPNGQPSVLASGRDVRDTFKRM. Heme b is bound at residue H259.

Belongs to the peroxidase family. Peroxidase/catalase subfamily. As to quaternary structure, homodimer or homotetramer. It depends on heme b as a cofactor. Formation of the three residue Trp-Tyr-Met cross-link is important for the catalase, but not the peroxidase activity of the enzyme.

The enzyme catalyses H2O2 + AH2 = A + 2 H2O. It catalyses the reaction 2 H2O2 = O2 + 2 H2O. Bifunctional enzyme with both catalase and broad-spectrum peroxidase activity. This chain is Catalase-peroxidase, found in Desulfitobacterium hafniense (strain Y51).